The chain runs to 130 residues: Tripartite terminase subunit 2 (130 aa).

It belongs to the herpesviridae TRM2 protein family. In terms of assembly, associates with TRM1 and TRM3 to form the tripartite terminase complex.

The protein localises to the host nucleus. Functionally, component of the molecular motor that translocates viral genomic DNA in empty capsid during DNA packaging. Forms a tripartite terminase complex together with TRM1 and TRM3 in the host cytoplasm. Once the complex reaches the host nucleus, it interacts with the capsid portal vertex. This portal forms a ring in which genomic DNA is translocated into the capsid. In Homo sapiens (Human), this protein is Tripartite terminase subunit 2.